Consider the following 360-residue polypeptide: Peptide chain release factor 1 (360 aa).

Glutamine 235 carries the N5-methylglutamine modification.

The protein belongs to the prokaryotic/mitochondrial release factor family. Post-translationally, methylated by PrmC. Methylation increases the termination efficiency of RF1.

It is found in the cytoplasm. Peptide chain release factor 1 directs the termination of translation in response to the peptide chain termination codons UAG and UAA. This is Peptide chain release factor 1 from Bordetella parapertussis (strain 12822 / ATCC BAA-587 / NCTC 13253).